We begin with the raw amino-acid sequence, 252 residues long: Ditrans,polycis-undecaprenyl-diphosphate synthase ((2E,6E)-farnesyl-diphosphate specific) (252 aa).

Residue Asp25 is part of the active site. Residue Asp25 coordinates Mg(2+). Substrate is bound by residues 26–29, Trp30, Arg38, His42, and 70–72; these read GNGR and SSE. Asn73 acts as the Proton acceptor in catalysis. 3 residues coordinate substrate: Trp74, Arg76, and Arg193. His198 provides a ligand contact to Mg(2+). 199–201 contacts substrate; the sequence is RIS. Glu212 contacts Mg(2+).

This sequence belongs to the UPP synthase family. Homodimer. The cofactor is Mg(2+).

The catalysed reaction is 8 isopentenyl diphosphate + (2E,6E)-farnesyl diphosphate = di-trans,octa-cis-undecaprenyl diphosphate + 8 diphosphate. In terms of biological role, catalyzes the sequential condensation of isopentenyl diphosphate (IPP) with (2E,6E)-farnesyl diphosphate (E,E-FPP) to yield (2Z,6Z,10Z,14Z,18Z,22Z,26Z,30Z,34E,38E)-undecaprenyl diphosphate (di-trans,octa-cis-UPP). UPP is the precursor of glycosyl carrier lipid in the biosynthesis of bacterial cell wall polysaccharide components such as peptidoglycan and lipopolysaccharide. The protein is Ditrans,polycis-undecaprenyl-diphosphate synthase ((2E,6E)-farnesyl-diphosphate specific) of Salmonella paratyphi A (strain ATCC 9150 / SARB42).